The primary structure comprises 146 residues: Holo-[acyl-carrier-protein] synthase (146 aa).

Mg(2+) contacts are provided by Asp8 and Glu61.

Belongs to the P-Pant transferase superfamily. AcpS family. It depends on Mg(2+) as a cofactor.

Its subcellular location is the cytoplasm. The enzyme catalyses apo-[ACP] + CoA = holo-[ACP] + adenosine 3',5'-bisphosphate + H(+). Functionally, transfers the 4'-phosphopantetheine moiety from coenzyme A to a Ser of acyl-carrier-protein. The sequence is that of Holo-[acyl-carrier-protein] synthase from Rhodopseudomonas palustris (strain ATCC BAA-98 / CGA009).